Reading from the N-terminus, the 610-residue chain is Protein SAN1 (610 aa).

Residues 1–10 (MSESGQEQNR) show a composition bias toward polar residues. Disordered stretches follow at residues 1–36 (MSESGQEQNRGTNTSPNNAENNNNSNAASGPLNGGA) and 176–231 (VDST…PSIP). Low complexity predominate over residues 11-36 (GTNTSPNNAENNNNSNAASGPLNGGA). The span at 194-203 (EGTKKRKDNE) shows a compositional bias: basic and acidic residues. Residues 210–223 (TADNDSNPSITNAT) show a composition bias toward polar residues. Residues 240-280 (NDEETNPSYKHSPIKLPCGHIFGRECIYKWSRLENSCPLCR) form an RING-type zinc finger. Disordered stretches follow at residues 318–348 (TAVNSTNENSSAPSENTSNTTVPTIGNASSG), 360–453 (VPQN…TDPH), 471–502 (GTSDTSATTAPGAQTVHNQGRNDSSSSDTTQG), 514–554 (GHFT…GVAS), and 569–610 (NNNS…RSSQ). The segment covering 319 to 348 (AVNSTNENSSAPSENTSNTTVPTIGNASSG) has biased composition (polar residues). Composition is skewed to low complexity over residues 384–406 (NGPSSTTQNPPSNSGGSNNNQSP) and 425–447 (PSASDSSASPSAANGPNSNNTSS). Residues 471-492 (GTSDTSATTAPGAQTVHNQGRN) show a composition bias toward polar residues. Over residues 493-502 (DSSSSDTTQG) the composition is skewed to low complexity. 2 stretches are compositionally biased toward polar residues: residues 533 to 554 (QQRGGSTGENNRNNLFSSGVAS) and 592 to 610 (DTTIHNDVPNDNNEQRSSQ).

Plays a specific role in mating-type regulation of yeast, by acting post-translationally to control the stability or activity of the SIR4 proteins. The chain is Protein SAN1 (SAN1) from Saccharomyces cerevisiae (strain ATCC 204508 / S288c) (Baker's yeast).